Here is an 804-residue protein sequence, read N- to C-terminus: Protein translocase subunit SecA (804 aa).

Residues Gln100, 118-122 (GEGKT), and Asp508 each bind ATP.

Belongs to the SecA family. In terms of assembly, monomer and homodimer. Part of the essential Sec protein translocation apparatus which comprises SecA, SecYEG and auxiliary proteins SecDF. Other proteins may also be involved.

The protein localises to the cell membrane. It localises to the cytoplasm. The enzyme catalyses ATP + H2O + cellular proteinSide 1 = ADP + phosphate + cellular proteinSide 2.. Functionally, part of the Sec protein translocase complex. Interacts with the SecYEG preprotein conducting channel. Has a central role in coupling the hydrolysis of ATP to the transfer of proteins into and across the cell membrane, serving as an ATP-driven molecular motor driving the stepwise translocation of polypeptide chains across the membrane. The sequence is that of Protein translocase subunit SecA from Leuconostoc citreum (strain KM20).